The following is a 461-amino-acid chain: Isthmin-1 (461 aa).

Residues 1-26 form the signal peptide; the sequence is MVRLAAELLLLLGLLLLTLHITVLRS. N33 is a glycosylation site (N-linked (GlcNAc...) asparagine). The segment covering 40–58 has biased composition (polar residues); it reads QDSRVAENNVNADSSSSVQ. 3 disordered regions span residues 40 to 62, 73 to 92, and 128 to 188; these read QDSRVAENNVNADSSSSVQLGPG, ASQPWAQSPGTGGSLQRDGP, and EGSE…NFLK. A compositionally biased stretch (basic and acidic residues) spans 131–141; that stretch reads EPEKGMRKENK. Positions 156-165 are enriched in low complexity; that stretch reads SSSSSSSSVS. The region spanning 215–259 is the TSP type-1 domain; that stretch reads DGEGDWSAWSPCSVSCGNGNQKRTRSCGYACTATESRTCDMPSCP. 3 disulfide bridges follow: C226–C253, C230–C258, and C241–C245. Residue N282 is glycosylated (N-linked (GlcNAc...) asparagine). An AMOP domain is found at 286 to 449; sequence LFGVDTDSCE…QKCAENPQDE (164 aa).

The protein belongs to the isthmin family.

It localises to the secreted. Functionally, may specifically influence certain angiogenesis process. In Danio rerio (Zebrafish), this protein is Isthmin-1 (ism1).